The sequence spans 550 residues: Leucine-rich repeat, immunoglobulin-like domain and transmembrane domain-containing protein 2 (550 aa).

The N-terminal stretch at 1–19 is a signal peptide; sequence MASVFHYFLLVLVFLDTHA. Residues 23–54 form the LRRNT domain; that stretch reads FCLPGCTCSEESFGRTLQCTSVSLGKIPGNLS. N-linked (GlcNAc...) asparagine glycosylation occurs at N52. LRR repeat units lie at residues 80 to 103, 104 to 125, 128 to 149, and 152 to 173; these read TLEY…EHLP, ELRE…AFRA, LLRV…ALQF, and SLTY…VFLN. The LRRCT domain maps to 200–252; sequence NPWVCDCRLRGLVQFVKSITLPVILVNSYLICQGPLSKAGQLFHETELSACMK. Residues 253–341 form the Ig-like domain; the sequence is PQISTPSANI…SIGKSNLVIS (89 aa). Cysteines 274 and 327 form a disulfide. Residues 361–451 form the Fibronectin type-III domain; it reads EGNAYIDLRV…QGQCVAFVTG (91 aa). The chain crosses the membrane as a helical span at residues 466–486; it reads VTVVLCVVLLAVPVGAYAWAA. Residues 508–550 are disordered; that stretch reads SCTPAAPQSKDGSFREHPAVCDDGEGHIDTEGDKEKGGTEDNS. Basic and acidic residues predominate over residues 519 to 550; it reads GSFREHPAVCDDGEGHIDTEGDKEKGGTEDNS.

As to quaternary structure, interacts with LRIT1; may form a heterodimer with LRIT1.

It localises to the membrane. This Homo sapiens (Human) protein is Leucine-rich repeat, immunoglobulin-like domain and transmembrane domain-containing protein 2 (LRIT2).